A 452-amino-acid polypeptide reads, in one-letter code: tRNA(Ile)-lysidine synthase (452 aa).

ATP is bound at residue 27 to 32 (SGGIDS).

It belongs to the tRNA(Ile)-lysidine synthase family.

The protein localises to the cytoplasm. It catalyses the reaction cytidine(34) in tRNA(Ile2) + L-lysine + ATP = lysidine(34) in tRNA(Ile2) + AMP + diphosphate + H(+). Its function is as follows. Ligates lysine onto the cytidine present at position 34 of the AUA codon-specific tRNA(Ile) that contains the anticodon CAU, in an ATP-dependent manner. Cytidine is converted to lysidine, thus changing the amino acid specificity of the tRNA from methionine to isoleucine. The chain is tRNA(Ile)-lysidine synthase from Persephonella marina (strain DSM 14350 / EX-H1).